The following is a 249-amino-acid chain: Probable transcriptional regulatory protein ACIAD2052 (249 aa).

This sequence belongs to the TACO1 family.

The protein resides in the cytoplasm. The chain is Probable transcriptional regulatory protein ACIAD2052 from Acinetobacter baylyi (strain ATCC 33305 / BD413 / ADP1).